The primary structure comprises 134 residues: D-xylulose reductase (134 aa).

The segment at 31–115 (PATTTXYKXQ…XXQXDKIGRY (85 aa)) is disordered. The span at 50–59 (QTHEGTHQDV) shows a compositional bias: basic and acidic residues.

It belongs to the zinc-containing alcohol dehydrogenase family.

The catalysed reaction is xylitol + NAD(+) = D-xylulose + NADH + H(+). Activated by calcium and inhibited by zinc. This Sus scrofa (Pig) protein is D-xylulose reductase.